The following is a 463-amino-acid chain: Glutamate--tRNA ligase 1 (463 aa).

Positions 10–20 match the 'HIGH' region motif; it reads PSPTGYLHIGG. The 'KMSKS' region motif lies at 238 to 242; that stretch reads KLSKR. Lysine 241 is a binding site for ATP.

Belongs to the class-I aminoacyl-tRNA synthetase family. Glutamate--tRNA ligase type 1 subfamily. As to quaternary structure, monomer.

The protein resides in the cytoplasm. The enzyme catalyses tRNA(Glu) + L-glutamate + ATP = L-glutamyl-tRNA(Glu) + AMP + diphosphate. Catalyzes the attachment of glutamate to tRNA(Glu) in a two-step reaction: glutamate is first activated by ATP to form Glu-AMP and then transferred to the acceptor end of tRNA(Glu). The protein is Glutamate--tRNA ligase 1 of Helicobacter pylori (strain P12).